Consider the following 93-residue polypeptide: Small ribosomal subunit protein bS20c (93 aa).

It belongs to the bacterial ribosomal protein bS20 family.

It localises to the plastid. The protein resides in the chloroplast. Binds directly to 16S ribosomal RNA. The polypeptide is Small ribosomal subunit protein bS20c (Thalassiosira pseudonana (Marine diatom)).